Reading from the N-terminus, the 397-residue chain is Plasma membrane iron permease (397 aa).

A run of 4 helical transmembrane segments spans residues 61–81 (FTAL…FYAL), 92–112 (IWEG…GFAM), 177–197 (AFPL…YFIY), and 292–312 (GSIL…FLMW). A phosphoserine mark is found at Ser-337 and Ser-338. The span at 337–346 (SSHTPVQSSS) shows a compositional bias: polar residues. Residues 337–364 (SSHTPVQSSSSEDEFKINSPTDDKGDKA) are disordered. Position 340 is a phosphothreonine (Thr-340). Residues Ser-346, Ser-347, and Ser-355 each carry the phosphoserine modification. Residues 349–364 (DEFKINSPTDDKGDKA) are compositionally biased toward basic and acidic residues. Thr-357 is modified (phosphothreonine). Ser-374, Ser-375, and Ser-376 each carry phosphoserine.

The protein belongs to the oxidase-dependent Fe transporter (OFeT) (TC 9.A.10.1) family.

The protein localises to the membrane. Its function is as follows. Permease for high affinity iron uptake. This Schizosaccharomyces pombe (strain 972 / ATCC 24843) (Fission yeast) protein is Plasma membrane iron permease (fip1).